The chain runs to 220 residues: Adenylate kinase (220 aa).

Residue 10 to 15 participates in ATP binding; that stretch reads GAGKGT. The NMP stretch occupies residues 30–59; that stretch reads STGDLFRANISQQTELGKLAKSYMDEGNLV. Residues Thr-31, Arg-36, 57-59, 85-88, and Gln-92 contribute to the AMP site; these read NLV and GFPR. The LID stretch occupies residues 126–164; it reads GRRICRNDSAHVFHVSYKPPKQEGVCDVCGGELYQRDDD. ATP contacts are provided by residues Arg-127 and 137–138; that span reads VF. 2 residues coordinate AMP: Arg-161 and Arg-172. An ATP-binding site is contributed by Gly-200.

Belongs to the adenylate kinase family. As to quaternary structure, monomer.

It is found in the cytoplasm. The enzyme catalyses AMP + ATP = 2 ADP. The protein operates within purine metabolism; AMP biosynthesis via salvage pathway; AMP from ADP: step 1/1. Its function is as follows. Catalyzes the reversible transfer of the terminal phosphate group between ATP and AMP. Plays an important role in cellular energy homeostasis and in adenine nucleotide metabolism. The polypeptide is Adenylate kinase (Streptomyces avermitilis (strain ATCC 31267 / DSM 46492 / JCM 5070 / NBRC 14893 / NCIMB 12804 / NRRL 8165 / MA-4680)).